We begin with the raw amino-acid sequence, 155 residues long: Small ribosomal subunit protein uS7 (155 aa).

It belongs to the universal ribosomal protein uS7 family. In terms of assembly, part of the 30S ribosomal subunit. Contacts proteins S9 and S11.

In terms of biological role, one of the primary rRNA binding proteins, it binds directly to 16S rRNA where it nucleates assembly of the head domain of the 30S subunit. Is located at the subunit interface close to the decoding center, probably blocks exit of the E-site tRNA. In Malacoplasma penetrans (strain HF-2) (Mycoplasma penetrans), this protein is Small ribosomal subunit protein uS7.